Consider the following 155-residue polypeptide: Endoribonuclease YbeY (155 aa).

3 residues coordinate Zn(2+): His116, His120, and His126.

This sequence belongs to the endoribonuclease YbeY family. It depends on Zn(2+) as a cofactor.

Its subcellular location is the cytoplasm. Single strand-specific metallo-endoribonuclease involved in late-stage 70S ribosome quality control and in maturation of the 3' terminus of the 16S rRNA. This is Endoribonuclease YbeY from Colwellia psychrerythraea (strain 34H / ATCC BAA-681) (Vibrio psychroerythus).